A 191-amino-acid chain; its full sequence is Protein YceI (191 aa).

Positions 1–22 (MKKSLLGLTFASLMFSAGSAVA) are cleaved as a signal peptide.

It belongs to the UPF0312 family. Type 1 subfamily.

The protein localises to the periplasm. The polypeptide is Protein YceI (Shigella flexneri).